Consider the following 327-residue polypeptide: Fe-S cluster assembly protein DRE2 (327 aa).

The span at 1-14 (MSPATVTIDTTPDF) shows a compositional bias: polar residues. Disordered regions lie at residues 1–20 (MSPATVTIDTTPDFSNGGAP) and 153–179 (NKGEGGGPVQSPAAATQPTAPAPAAAA). Residues 17–144 (GGAPHSTLLL…EKPAEEVAAV (128 aa)) are N-terminal SAM-like domain. The segment at 145-214 (PLKFLKKKNK…EDELMTEEDL (70 aa)) is linker. Residues 164 to 179 (PAAATQPTAPAPAAAA) show a composition bias toward low complexity. Positions 224, 235, 238, and 240 each coordinate [2Fe-2S] cluster. Positions 224–240 (CAPKPGKKRRACKDCTC) are fe-S binding site A. Residues C290, C293, C301, and C304 each contribute to the [4Fe-4S] cluster site. 2 consecutive short sequence motifs (cx2C motif) follow at residues 290-293 (CGSC) and 301-304 (CADC). The tract at residues 290 to 304 (CGSCALGDAFRCADC) is fe-S binding site B.

This sequence belongs to the anamorsin family. Monomer. Interacts with TAH18. Interacts with MIA40. The cofactor is [2Fe-2S] cluster. Requires [4Fe-4S] cluster as cofactor.

The protein resides in the cytoplasm. It localises to the mitochondrion intermembrane space. Component of the cytosolic iron-sulfur (Fe-S) protein assembly (CIA) machinery required for the maturation of extramitochondrial Fe-S proteins. Part of an electron transfer chain functioning in an early step of cytosolic Fe-S biogenesis, facilitating the de novo assembly of a [4Fe-4S] cluster on the scaffold complex CFD1-NBP35. Electrons are transferred to DRE2 from NADPH via the FAD- and FMN-containing protein TAH18. TAH18-DRE2 are also required for the assembly of the diferric tyrosyl radical cofactor of ribonucleotide reductase (RNR), probably by providing electrons for reduction during radical cofactor maturation in the catalytic small subunit RNR2. The sequence is that of Fe-S cluster assembly protein DRE2 from Pyricularia oryzae (strain 70-15 / ATCC MYA-4617 / FGSC 8958) (Rice blast fungus).